A 458-amino-acid polypeptide reads, in one-letter code: 3-isopropylmalate dehydratase large subunit (458 aa).

Cys339, Cys399, and Cys402 together coordinate [4Fe-4S] cluster.

Belongs to the aconitase/IPM isomerase family. LeuC type 1 subfamily. In terms of assembly, heterodimer of LeuC and LeuD. It depends on [4Fe-4S] cluster as a cofactor.

The catalysed reaction is (2R,3S)-3-isopropylmalate = (2S)-2-isopropylmalate. It participates in amino-acid biosynthesis; L-leucine biosynthesis; L-leucine from 3-methyl-2-oxobutanoate: step 2/4. In terms of biological role, catalyzes the isomerization between 2-isopropylmalate and 3-isopropylmalate, via the formation of 2-isopropylmaleate. The sequence is that of 3-isopropylmalate dehydratase large subunit from Lactococcus lactis subsp. cremoris (strain SK11).